The following is a 103-amino-acid chain: Protein IQ-DOMAIN 20 (103 aa).

The calmodulin-binding stretch occupies residues valine 10 to arginine 22. IQ domains lie at glutamate 36 to leucine 62 and valine 63 to alanine 87.

This sequence belongs to the IQD family. As to quaternary structure, interacts with calmodulin (CaM and CML) at the plasma membrane in a calcium ion Ca(2+)- independent manner, however, Ca(2+) seems to modulate calmodulin binding. Binds to multiple calmodulin (CaM) in the presence of Ca(2+) and CaM-like proteins.

The protein resides in the nucleus. The protein localises to the nucleolus. It is found in the cell membrane. In terms of biological role, may be involved in cooperative interactions with calmodulins or calmodulin-like proteins. Recruits calmodulin proteins to microtubules, thus being a potential scaffold in cellular signaling and trafficking. May associate with nucleic acids and regulate gene expression at the transcriptional or post-transcriptional level. This chain is Protein IQ-DOMAIN 20, found in Arabidopsis thaliana (Mouse-ear cress).